The primary structure comprises 268 residues: Nickel import ATP-binding protein NikE (268 aa).

In terms of domain architecture, ABC transporter spans Leu-4–Asn-252. Gly-45–Ser-52 provides a ligand contact to ATP.

The protein belongs to the ABC transporter superfamily. Nickel importer (TC 3.A.1.5.3) family. The complex is composed of two ATP-binding proteins (NikD and NikE), two transmembrane proteins (NikB and NikC) and a solute-binding protein (NikA).

It localises to the cell inner membrane. The catalysed reaction is Ni(2+)(out) + ATP + H2O = Ni(2+)(in) + ADP + phosphate + H(+). Part of the ABC transporter complex NikABCDE involved in nickel import. Responsible for energy coupling to the transport system. The polypeptide is Nickel import ATP-binding protein NikE (Escherichia coli (strain K12)).